The sequence spans 396 residues: Anhydro-N-acetylmuramic acid kinase (396 aa).

21–28 (GTSADGID) contacts ATP.

It belongs to the anhydro-N-acetylmuramic acid kinase family.

The enzyme catalyses 1,6-anhydro-N-acetyl-beta-muramate + ATP + H2O = N-acetyl-D-muramate 6-phosphate + ADP + H(+). The protein operates within amino-sugar metabolism; 1,6-anhydro-N-acetylmuramate degradation. It participates in cell wall biogenesis; peptidoglycan recycling. In terms of biological role, catalyzes the specific phosphorylation of 1,6-anhydro-N-acetylmuramic acid (anhMurNAc) with the simultaneous cleavage of the 1,6-anhydro ring, generating MurNAc-6-P. Is required for the utilization of anhMurNAc either imported from the medium or derived from its own cell wall murein, and thus plays a role in cell wall recycling. The sequence is that of Anhydro-N-acetylmuramic acid kinase from Caldanaerobacter subterraneus subsp. tengcongensis (strain DSM 15242 / JCM 11007 / NBRC 100824 / MB4) (Thermoanaerobacter tengcongensis).